A 601-amino-acid polypeptide reads, in one-letter code: DNA ligase (601 aa).

Position 258 (Asp258) interacts with ATP. Lys260 acts as the N6-AMP-lysine intermediate in catalysis. The ATP site is built by Arg265, Arg280, Glu310, Phe350, Arg427, and Lys433. A disordered region spans residues 568–601 (DKSPEDATTTDEILEMYNKQPKKKIESPPIDESV).

The protein belongs to the ATP-dependent DNA ligase family. Requires Mg(2+) as cofactor.

The enzyme catalyses ATP + (deoxyribonucleotide)n-3'-hydroxyl + 5'-phospho-(deoxyribonucleotide)m = (deoxyribonucleotide)n+m + AMP + diphosphate.. Its function is as follows. DNA ligase that seals nicks in double-stranded DNA during DNA replication, DNA recombination and DNA repair. This Saccharolobus islandicus (strain Y.N.15.51 / Yellowstone #2) (Sulfolobus islandicus) protein is DNA ligase.